The chain runs to 214 residues: Octanoyltransferase (214 aa).

A BPL/LPL catalytic domain is found at 35–211 (KSNMNFIWLG…IIHEEFNFNF (177 aa)). Residues 75–82 (RGGEVTCH), 142–144 (SIG), and 155–157 (GFS) each bind substrate. Catalysis depends on Cys-173, which acts as the Acyl-thioester intermediate.

It belongs to the LipB family.

It is found in the cytoplasm. It catalyses the reaction octanoyl-[ACP] + L-lysyl-[protein] = N(6)-octanoyl-L-lysyl-[protein] + holo-[ACP] + H(+). It participates in protein modification; protein lipoylation via endogenous pathway; protein N(6)-(lipoyl)lysine from octanoyl-[acyl-carrier-protein]: step 1/2. In terms of biological role, catalyzes the transfer of endogenously produced octanoic acid from octanoyl-acyl-carrier-protein onto the lipoyl domains of lipoate-dependent enzymes. Lipoyl-ACP can also act as a substrate although octanoyl-ACP is likely to be the physiological substrate. This chain is Octanoyltransferase, found in Prochlorococcus marinus subsp. pastoris (strain CCMP1986 / NIES-2087 / MED4).